Consider the following 343-residue polypeptide: Flap endonuclease 1 (343 aa).

The N-domain stretch occupies residues 1–98 (MGVPIGDLVP…KELEKRREAR (98 aa)). 7 residues coordinate Mg(2+): aspartate 27, aspartate 80, glutamate 152, glutamate 154, aspartate 173, aspartate 175, and aspartate 236. The I-domain stretch occupies residues 116–258 (EARKYAQRAT…KALEIVRYSR (143 aa)). Positions 330-338 (RQSTLESWF) are interaction with PCNA.

This sequence belongs to the XPG/RAD2 endonuclease family. FEN1 subfamily. In terms of assembly, interacts with PCNA. PCNA stimulates the nuclease activity without altering cleavage specificity. Requires Mg(2+) as cofactor.

In terms of biological role, structure-specific nuclease with 5'-flap endonuclease and 5'-3' exonuclease activities involved in DNA replication and repair. During DNA replication, cleaves the 5'-overhanging flap structure that is generated by displacement synthesis when DNA polymerase encounters the 5'-end of a downstream Okazaki fragment. Binds the unpaired 3'-DNA end and kinks the DNA to facilitate 5' cleavage specificity. Cleaves one nucleotide into the double-stranded DNA from the junction in flap DNA, leaving a nick for ligation. Also involved in the base excision repair (BER) pathway. Acts as a genome stabilization factor that prevents flaps from equilibrating into structures that lead to duplications and deletions. Also possesses 5'-3' exonuclease activity on nicked or gapped double-stranded DNA. The polypeptide is Flap endonuclease 1 (Pyrococcus horikoshii (strain ATCC 700860 / DSM 12428 / JCM 9974 / NBRC 100139 / OT-3)).